The following is a 629-amino-acid chain: Replication protein A 70 kDa DNA-binding subunit D (629 aa).

Positions 112–135 (LDSKSGEEEAREPKKQKLEHSPVS) are disordered. Residues 115–131 (KSGEEEAREPKKQKLEH) show a composition bias toward basic and acidic residues. A DNA-binding region (OB) is located at residues 194–280 (WTIKVRVTNK…QNDYEMTLNE (87 aa)). A C4-type zinc finger spans residues 492 to 512 (CKTCNKKVTEALDSGYWCEGC).

The protein belongs to the replication factor A protein 1 family. Heterotrimer of RPA1, RPA2 and RPA3 (canonical replication protein A complex).

It is found in the nucleus. Functionally, component of the replication protein A complex (RPA) required for DNA recombination, repair and replication. The activity of RPA is mediated by single-stranded DNA binding and protein interactions. Probably involved in repair of double-strand DNA breaks (DSBs) induced by genotoxic stresses. This chain is Replication protein A 70 kDa DNA-binding subunit D (RPA1D), found in Arabidopsis thaliana (Mouse-ear cress).